Reading from the N-terminus, the 311-residue chain is Probable 5-dehydro-4-deoxyglucarate dehydratase (311 aa).

The protein belongs to the DapA family.

It catalyses the reaction 5-dehydro-4-deoxy-D-glucarate + H(+) = 2,5-dioxopentanoate + CO2 + H2O. It participates in carbohydrate acid metabolism; D-glucarate degradation; 2,5-dioxopentanoate from D-glucarate: step 2/2. The sequence is that of Probable 5-dehydro-4-deoxyglucarate dehydratase from Ralstonia nicotianae (strain ATCC BAA-1114 / GMI1000) (Ralstonia solanacearum).